The following is a 433-amino-acid chain: 3-phosphoshikimate 1-carboxyvinyltransferase (433 aa).

3-phosphoshikimate is bound by residues Lys20, Ser21, and Arg25. Position 20 (Lys20) interacts with phosphoenolpyruvate. Gly92 and Arg121 together coordinate phosphoenolpyruvate. 3-phosphoshikimate-binding residues include Ser167, Ser168, Gln169, Ser195, Asp315, and Lys342. Gln169 provides a ligand contact to phosphoenolpyruvate. Catalysis depends on Asp315, which acts as the Proton acceptor. Arg346 and Arg388 together coordinate phosphoenolpyruvate.

Belongs to the EPSP synthase family. Monomer.

It localises to the cytoplasm. The catalysed reaction is 3-phosphoshikimate + phosphoenolpyruvate = 5-O-(1-carboxyvinyl)-3-phosphoshikimate + phosphate. Its pathway is metabolic intermediate biosynthesis; chorismate biosynthesis. Catalyzes the transfer of the enolpyruvyl moiety of phosphoenolpyruvate (PEP) to the 5-hydroxyl of shikimate-3-phosphate (S3P) to produce enolpyruvyl shikimate-3-phosphate and inorganic phosphate. The chain is 3-phosphoshikimate 1-carboxyvinyltransferase from Methanococcus aeolicus (strain ATCC BAA-1280 / DSM 17508 / OCM 812 / Nankai-3).